The chain runs to 121 residues: NADH-quinone oxidoreductase subunit A 1 (121 aa).

3 consecutive transmembrane segments (helical) span residues 6–26 (FPIFVVISIAIILAVVLLSIG), 62–82 (LVAMIFIVFDIEVIFMYPWAV), and 90–110 (FYGLIPMVTFVLILLAGYYYI).

It belongs to the complex I subunit 3 family. As to quaternary structure, NDH-1 is composed of 14 different subunits. Subunits NuoA, H, J, K, L, M, N constitute the membrane sector of the complex.

The protein resides in the cell inner membrane. It carries out the reaction a quinone + NADH + 5 H(+)(in) = a quinol + NAD(+) + 4 H(+)(out). Its function is as follows. NDH-1 shuttles electrons from NADH, via FMN and iron-sulfur (Fe-S) centers, to quinones in the respiratory chain. The immediate electron acceptor for the enzyme in this species is believed to be a menaquinone. Couples the redox reaction to proton translocation (for every two electrons transferred, four hydrogen ions are translocated across the cytoplasmic membrane), and thus conserves the redox energy in a proton gradient. This is NADH-quinone oxidoreductase subunit A 1 from Chloroherpeton thalassium (strain ATCC 35110 / GB-78).